The sequence spans 91 residues: Defensin-like protein 269 (91 aa).

The N-terminal stretch at 1-25 (MAVSKTTMLIVLVAIILSCVSISNA) is a signal peptide. Intrachain disulfides connect Cys41–Cys82, Cys53–Cys72, Cys59–Cys77, and Cys63–Cys79.

Belongs to the DEFL family.

It localises to the secreted. In Arabidopsis thaliana (Mouse-ear cress), this protein is Defensin-like protein 269.